The sequence spans 114 residues: Ribonuclease P protein component (114 aa).

This sequence belongs to the RnpA family. As to quaternary structure, consists of a catalytic RNA component (M1 or rnpB) and a protein subunit.

It carries out the reaction Endonucleolytic cleavage of RNA, removing 5'-extranucleotides from tRNA precursor.. Functionally, RNaseP catalyzes the removal of the 5'-leader sequence from pre-tRNA to produce the mature 5'-terminus. It can also cleave other RNA substrates such as 4.5S RNA. The protein component plays an auxiliary but essential role in vivo by binding to the 5'-leader sequence and broadening the substrate specificity of the ribozyme. In Legionella pneumophila (strain Lens), this protein is Ribonuclease P protein component.